The following is a 2339-amino-acid chain: Voltage-dependent N-type calcium channel subunit alpha-1B (2339 aa).

Over 1-90 (MVRFGDELGG…DNVVRKYAKR (90 aa)) the chain is Cytoplasmic. The span at 15 to 34 (AGGAERARGGGAGGAGGPGP) shows a compositional bias: gly residues. A disordered region spans residues 15–37 (AGGAERARGGGAGGAGGPGPGGL). An Omega-N-methylarginine modification is found at arginine 22. Residues 82-359 (NVVRKYAKRI…LVLGVLSGEF (278 aa)) form an I repeat. Residues 91 to 114 (ITEWPPFEYMILATIIANCIVLAL) form a helical membrane-spanning segment. Over 115–131 (EQHLPDGDKTPMSERLD) the chain is Extracellular. A helical membrane pass occupies residues 132 to 152 (DTEPYFIGIFCFEAGIKILAL). At 153-163 (GFVLHKGSYLR) the chain is on the cytoplasmic side. A helical membrane pass occupies residues 164 to 182 (NGWNVMDFVVVLTGILATA). Topologically, residues 183–187 (GTDFD) are extracellular. Residues 188–211 (LRTLRAVRVLRPLKLVSGIPSLQV) traverse the membrane as a helical segment. The Cytoplasmic segment spans residues 212–221 (VLKSIMKAMV). The chain crosses the membrane as a helical span at residues 222–244 (PLLQIGLLLFFAILMFAIIGLEF). Topologically, residues 245 to 331 (YMGKFHKACF…NTNDAAGNTW (87 aa)) are extracellular. The N-linked (GlcNAc...) asparagine glycan is linked to asparagine 256. A helical transmembrane segment spans residues 332 to 356 (NWLYFIPLIIIGSFFMLNLVLGVLS). The Cytoplasmic portion of the chain corresponds to 357–483 (GEFAKERERV…FFIRRMVKAQ (127 aa)). The binding to the beta subunit stretch occupies residues 379 to 396 (QQIERELNGYLEWIFKAE). Phosphoserine is present on serine 411. Position 452 to 459 (452 to 459 (ASLKSGKT)) interacts with ATP. Residues 469–713 (EKMFRFFIRR…VFLAIAVDNL (245 aa)) form an II repeat. Residues 484–502 (SFYWTVLCVVALNTLCVAM) form a helical membrane-spanning segment. Residues 503–512 (VHYNQPQRLT) lie on the Extracellular side of the membrane. Residues 513–535 (TALYFAEFVFLGLFLTEMSLKMY) traverse the membrane as a helical segment. Topologically, residues 536 to 545 (GLGPRSYFRS) are cytoplasmic. Serine 545 lines the a 1,2-diacyl-sn-glycero-3-phospho-(1D-myo-inositol-4,5-bisphosphate) pocket. The chain crosses the membrane as a helical span at residues 546–567 (SFNCFDFGVIVGSIFEVVWAAV). The Extracellular segment spans residues 568–574 (KPGTSFG). The chain crosses the membrane as a helical span at residues 575–587 (ISVLRALRLLRIF). The a 1,2-diacyl-sn-glycero-3-phospho-(1D-myo-inositol-4,5-bisphosphate) site is built by arginine 585 and lysine 588. Residues 588-605 (KVTKYWNSLRNLVVSLLN) are Cytoplasmic-facing. Residues 606–631 (SMKSIISLLFLLFLFIVVFALLGMQL) traverse the membrane as a helical segment. Residues 632-683 (FGGQFNFKDETPTTNFDTFPAAILTVFQILTGEDWNAVMYHGIESQGGVSRG) lie on the Extracellular side of the membrane. A helical membrane pass occupies residues 684–710 (MFSSFYFIVLTLFGNYTLLNVFLAIAV). Residues 711–1156 (DNLANAQELT…CCHYIVTMRY (446 aa)) lie on the Cytoplasmic side of the membrane. Serine 746, serine 749, and serine 784 each carry phosphoserine. Basic and acidic residues-rich tracts occupy residues 809-827 (DVKTHLDRPLVVEPGRDAP), 870-891 (EQDRAEALRAEGGELGPREERG), 927-937 (GSPEEAAEREP), 973-984 (CPREAESSEEPA), and 999-1026 (TAEKDKEAAEKGGEATEAEKDKEARNHQ). Disordered regions lie at residues 809-1026 (DVKT…RNHQ) and 1056-1084 (VEEQPEDADNQRNVTRMGSQPPDTSTTVH). The span at 1066-1083 (QRNVTRMGSQPPDTSTTV) shows a compositional bias: polar residues. A Phosphoserine modification is found at serine 1074. The III repeat unit spans residues 1142 to 1424 (NLLRRCCHYI…IFVALIIITF (283 aa)). Residues 1157–1175 (FEMVILVVIALSSIALAAE) traverse the membrane as a helical segment. Residues 1176–1183 (DPVRTDSP) are Extracellular-facing. The helical transmembrane segment at 1184 to 1208 (RNNALKYMDYIFTGVFTFEMVIKMI) threads the bilayer. Topologically, residues 1209 to 1222 (DLGLLLHPGAYFRD) are cytoplasmic. A helical membrane pass occupies residues 1223-1243 (LWNILDFIVVSGALVAFAFSG). Over 1244 to 1249 (SKGKDI) the chain is Extracellular. Residues 1250–1270 (STIKSLRVLRVLRPLKTIKRL) form a helical membrane-spanning segment. At 1271–1288 (PKLKAVFDCVVNSLKNVL) the chain is on the cytoplasmic side. The helical transmembrane segment at 1289 to 1308 (NILIVYMLFMFIFAVIAVQL) threads the bilayer. The Extracellular segment spans residues 1309–1395 (FKGKFFYCTD…EQGPSPGYRM (87 aa)). Residues 1396-1421 (ELSIFYVVYFVVFPFFFVNIFVALII) form a helical membrane-spanning segment. At 1422-1476 (ITFQEQGDKVMSECSLEKNERACIDFAISARPLTRYMPQNKQSFQYKTWTFVVSP) the chain is on the cytoplasmic side. The IV repeat unit spans residues 1461 to 1714 (NKQSFQYKTW…LFVAVIMDNF (254 aa)). Residues 1477 to 1495 (PFEYFIMAMIALNTVVLMM) traverse the membrane as a helical segment. Residues 1496-1503 (KFYDAPYE) lie on the Extracellular side of the membrane. Residues 1504 to 1528 (YELMLKCLNIVFTSMFSMECVLKII) form a helical membrane-spanning segment. Over 1529–1538 (AFGVLNYFRD) the chain is Cytoplasmic. A helical transmembrane segment spans residues 1539 to 1560 (AWNVFDFVTVLGSITDILVTEI). Over 1561-1566 (ANNFIN) the chain is Extracellular. N-linked (GlcNAc...) asparagine glycosylation occurs at asparagine 1566. Residues 1567–1585 (LSFLRLFRAARLIKLLRQG) traverse the membrane as a helical segment. Residues 1586-1604 (YTIRILLWTFVQSFKALPY) lie on the Cytoplasmic side of the membrane. Residues 1605 to 1624 (VCLLIAMLFFIYAIIGMQVF) form a helical membrane-spanning segment. Residues 1625–1686 (GNIALDDDTS…SNASECGSDF (62 aa)) are Extracellular-facing. Asparagine 1678 carries N-linked (GlcNAc...) asparagine glycosylation. A helical transmembrane segment spans residues 1687–1710 (AYFYFVSFIFLCSFLMLNLFVAVI). Residues 1711–2339 (MDNFEYLTRD…CHHPDRDRRC (629 aa)) are Cytoplasmic-facing. The region spanning 1727 to 1762 (HHLDEFIRVWAEYDPAACGRISYSDMFEMLKHMSPP) is the EF-hand domain. The Ca(2+) site is built by aspartate 1740, arginine 1746, and aspartate 1751. Positions 1983–2312 (TLSGPDAEPQ…QPPPLRRVPN (330 aa)) are disordered. A compositionally biased stretch (basic residues) spans 2050 to 2064 (PHHHHHRCHRRRDRK). Serine 2067 carries the post-translational modification Phosphoserine. Over residues 2099–2136 (CRRERERRQERGRSQERRQPSSSSSEKHRFYSCDRFGG) the composition is skewed to basic and acidic residues. 2 stretches are compositionally biased toward polar residues: residues 2144–2155 (PSLSSHPTSPTA) and 2165–2181 (GSGSVHGSPLLSTSGAS). 3 positions are modified to phosphoserine: serine 2224, serine 2233, and serine 2256. Residues 2286–2302 (SNSGRSSRTSYVSSLTS) are compositionally biased toward low complexity.

It belongs to the calcium channel alpha-1 subunit (TC 1.A.1.11) family. CACNA1B subfamily. In terms of assembly, multisubunit complex consisting of alpha-1, alpha-2, beta and delta subunits in a 1:1:1:1 ratio. The channel activity is directed by the pore-forming and voltage-sensitive alpha-1 subunit. In many cases, this subunit is sufficient to generate voltage-sensitive calcium channel activity. The auxiliary subunits beta and alpha-2/delta linked by a disulfide bridge regulate the channel activity. Interacts with RIMS1. Interacts with FMR1 (via C-terminus); this interaction induces a decrease in the number of presynaptic functional CACNA1B channels at the cell surface. Post-translationally, phosphorylated in vitro by CaM-kinase II, PKA, PKC and CGPK. In terms of tissue distribution, widespread expression throughout the brain. Highest levels in corpus striatum and midbrain.

The protein resides in the membrane. The catalysed reaction is Ca(2+)(in) = Ca(2+)(out). With respect to regulation, is specifically blocked by omega-conotoxin GVIA. Is specifically blocked by omega-conotoxin MVIIA (ziconotide). Is insensitive to dihydropyridines (DHP). Functionally, voltage-sensitive calcium channels (VSCC) mediate the entry of calcium ions into excitable cells and are also involved in a variety of calcium-dependent processes, including muscle contraction, hormone or neurotransmitter release, gene expression, cell motility, cell division and cell death. This alpha-1B subunit gives rise to N-type calcium currents. N-type calcium channels belong to the 'high-voltage activated' (HVA) group. They are involved in pain signaling. Calcium channels containing alpha-1B subunit may play a role in directed migration of immature neurons. Mediates Ca(2+) release probability at hippocampal neuronal soma and synaptic terminals. This is Voltage-dependent N-type calcium channel subunit alpha-1B (CACNA1B) from Oryctolagus cuniculus (Rabbit).